The primary structure comprises 433 residues: Alpha-(1,3)-fucosyltransferase 4 (433 aa).

The interval 1 to 20 (MAPAGRKLQHESRCRPSRPV) is disordered. The Cytoplasmic portion of the chain corresponds to 1–54 (MAPAGRKLQHESRCRPSRPVDAWRAAATTRGRCMGTPGARRTARRGGWGLPRTS). A helical; Signal-anchor for type II membrane protein transmembrane segment spans residues 55-74 (SGLAAAGLLCTALTACLCWG). Residues 75–433 (QLPPLPWASP…IHNLADWFQR (359 aa)) are Lumenal-facing. 2 N-linked (GlcNAc...) asparagine glycosylation sites follow: asparagine 117 and asparagine 218.

This sequence belongs to the glycosyltransferase 10 family. As to expression, in adult, highest expression in spleen, testis, brain, lung, kidney and skeletal muscle and to a lesser extent in liver and heart.

It is found in the golgi apparatus. It localises to the golgi stack membrane. The catalysed reaction is a beta-D-galactosyl-(1-&gt;4)-N-acetyl-beta-D-glucosaminyl derivative + GDP-beta-L-fucose = a beta-D-galactosyl-(1-&gt;4)-[alpha-L-fucosyl-(1-&gt;3)]-N-acetyl-beta-D-glucosaminyl derivative + GDP + H(+). It catalyses the reaction an N-acetyl-alpha-neuraminyl-(2-&gt;3)-beta-D-galactosyl-(1-&gt;4)-N-acetyl-beta-D-glucosaminyl derivative + GDP-beta-L-fucose = an alpha-Neu5Ac-(2-&gt;3)-beta-D-Gal-(1-&gt;4)-[alpha-L-Fuc-(1-&gt;3)]-beta-D-GlcNAc derivative + GDP + H(+). The enzyme catalyses an alpha-Neu5Ac-(2-&gt;3)-beta-D-Gal-(1-&gt;4)-beta-D-GlcNAc-(1-&gt;3)-beta-D-Gal-(1-&gt;4)-beta-D-GlcNAc derivative + GDP-beta-L-fucose = an alpha-Neu5Ac-(2-&gt;3)-beta-D-Gal-(1-&gt;4)-beta-D-GlcNAc-(1-&gt;3)-beta-D-Gal-(1-&gt;4)-[alpha-L-Fuc-(1-&gt;3)]-beta-D-GlcNAc derivative + GDP + H(+). It carries out the reaction an alpha-Neu5Ac-(2-&gt;3)-beta-D-Gal-(1-&gt;4)-beta-D-GlcNAc6S derivative + GDP-beta-L-fucose = an alpha-Neu5Ac-(2-&gt;3)-beta-D-Gal-(1-&gt;4)-[alpha-L-Fuc-(1-&gt;3)]-beta-D-GlcNAc6S derivative + GDP + H(+). It functions in the pathway protein modification; protein glycosylation. Functionally, catalyzes alpha(1-&gt;3) linkage of fucosyl moiety transferred from GDP-beta-L-fucose to N-acetyl glucosamine (GlcNAc) within type 2 lactosamine (LacNAc, Gal-beta(1-&gt;4)GlcNAc) glycan attached to N- or O-linked glycoproteins. Robustly fucosylates nonsialylated distal LacNAc unit of the polylactosamine chain to form Lewis X antigen (CD15), a glycan determinant known to mediate important cellular functions in development and immunity. Fucosylates with lower efficiency sialylated LacNAc acceptors to form sialyl Lewis X and 6-sulfo sialyl Lewis X determinants that serve as recognition epitopes for C-type lectins. Together with FUT7 contributes to SELE, SELL and SELP selectin ligand biosynthesis and selectin-dependent lymphocyte homing, leukocyte migration and blood leukocyte homeostasis. In a cell type specific manner, may also fucosylate the internal LacNAc unit of the polylactosamine chain to form VIM-2 antigen that serves as recognition epitope for SELE. In Rattus norvegicus (Rat), this protein is Alpha-(1,3)-fucosyltransferase 4 (Fut4).